Consider the following 780-residue polypeptide: Phosphoenolpyruvate synthase (780 aa).

Residue H409 is the Tele-phosphohistidine intermediate of the active site. 7 residues coordinate substrate: R499, R566, E668, G689, S690, N691, and D692. E668 provides a ligand contact to Mg(2+). D692 contributes to the Mg(2+) binding site.

The protein belongs to the PEP-utilizing enzyme family. The cofactor is Mg(2+).

It carries out the reaction pyruvate + ATP + H2O = phosphoenolpyruvate + AMP + phosphate + 2 H(+). The protein operates within carbohydrate biosynthesis; gluconeogenesis. Its function is as follows. Catalyzes the phosphorylation of pyruvate to phosphoenolpyruvate. The sequence is that of Phosphoenolpyruvate synthase (ppsA) from Deinococcus radiodurans (strain ATCC 13939 / DSM 20539 / JCM 16871 / CCUG 27074 / LMG 4051 / NBRC 15346 / NCIMB 9279 / VKM B-1422 / R1).